Here is a 231-residue protein sequence, read N- to C-terminus: 7-cyano-7-deazaguanine synthase (231 aa).

8–18 (FSGGQDSTTCL) is an ATP binding site. Cys188, Cys197, Cys200, and Cys203 together coordinate Zn(2+).

It belongs to the QueC family. The cofactor is Zn(2+).

The enzyme catalyses 7-carboxy-7-deazaguanine + NH4(+) + ATP = 7-cyano-7-deazaguanine + ADP + phosphate + H2O + H(+). It participates in purine metabolism; 7-cyano-7-deazaguanine biosynthesis. Functionally, catalyzes the ATP-dependent conversion of 7-carboxy-7-deazaguanine (CDG) to 7-cyano-7-deazaguanine (preQ(0)). This chain is 7-cyano-7-deazaguanine synthase, found in Salmonella gallinarum (strain 287/91 / NCTC 13346).